A 113-amino-acid polypeptide reads, in one-letter code: Large ribosomal subunit protein bL19 (113 aa).

Belongs to the bacterial ribosomal protein bL19 family.

This protein is located at the 30S-50S ribosomal subunit interface and may play a role in the structure and function of the aminoacyl-tRNA binding site. In Mycobacterium marinum (strain ATCC BAA-535 / M), this protein is Large ribosomal subunit protein bL19.